Reading from the N-terminus, the 163-residue chain is Nucleotide-binding protein Tery_2743 (163 aa).

It belongs to the YajQ family.

Its function is as follows. Nucleotide-binding protein. This is Nucleotide-binding protein Tery_2743 from Trichodesmium erythraeum (strain IMS101).